The chain runs to 201 residues: Orotate phosphoribosyltransferase (201 aa).

113 to 121 (EDIITTGKS) contacts 5-phospho-alpha-D-ribose 1-diphosphate. Orotate is bound by residues Thr-117 and Arg-145.

The protein belongs to the purine/pyrimidine phosphoribosyltransferase family. PyrE subfamily. As to quaternary structure, homodimer. The cofactor is Mg(2+).

The catalysed reaction is orotidine 5'-phosphate + diphosphate = orotate + 5-phospho-alpha-D-ribose 1-diphosphate. It functions in the pathway pyrimidine metabolism; UMP biosynthesis via de novo pathway; UMP from orotate: step 1/2. Functionally, catalyzes the transfer of a ribosyl phosphate group from 5-phosphoribose 1-diphosphate to orotate, leading to the formation of orotidine monophosphate (OMP). The polypeptide is Orotate phosphoribosyltransferase (Helicobacter pylori (strain G27)).